The primary structure comprises 145 residues: Halilectin 3, alpha chain (145 aa).

Asn-73 carries N-linked (GlcNAc...) asparagine glycosylation.

In terms of assembly, probable heterotrimer consisting of an alpha chain and two beta chains. The alpha chain can probably have different glycosylation states. Glycosylated.

Lectin with affinity for N-acetyl-galactosamine, carragenan and glycoprotein porcine stomach mucin (PSM). Has metal-independent hemagglutinating activity towards erythrocytes from rabbit and human. Hemagglutinating activity is not inhibited by D-galactose, D-glucose, D-mannose, D-fucose, methyl-alpha-D-galactopyranoside, methyl-alpha-D-glucopyranoside, N-acetyl-glucosamine, N-acetyl-mannosamine, D-fructose, alpha-D-lactose, beta-D-lactose, D-lactulose, D-sucrose, fucoidan or glycoproteins thyroglobulin and ovalmucoid. This chain is Halilectin 3, alpha chain, found in Haliclona caerulea (Blue Caribbean sponge).